The chain runs to 1147 residues: Sterol regulatory element-binding protein 1 (1147 aa).

The interval 1–60 (MDEPPFSEAALEQALGEPCDLDAALLTDIEDMLQLINNQDSDFPGLFDPPYAGSGAGGTD) is transcriptional activation (acidic). At 1–487 (MDEPPFSEAA…HSRGMLDRSR (487 aa)) the chain is on the cytoplasmic side. The 9aaTAD signature appears at 27-35 (TDIEDMLQL). The segment at 39–193 (QDSDFPGLFD…PLPGLPLASP (155 aa)) is disordered. Composition is skewed to low complexity over residues 62–71 (ASPDTSSPGS) and 78–95 (TLSS…AAPS). Residues 96–105 (PLSPPQPAPT) show a composition bias toward pro residues. Phosphoserine is present on residues Ser98 and Ser117. Residues 170-190 (GGFSTGSPPGNTQQPLPGLPL) are compositionally biased toward low complexity. The interaction with LMNA stretch occupies residues 234–497 (QQVPVLLQPH…LALCTLVFLC (264 aa)). In terms of domain architecture, bHLH spans 323–373 (EKRTAHNAIEKRYRSSINDKIIELKDLVVGTEAKLNKSAVLRKAIDYIRFL). Ser337 and Ser338 each carry phosphoserine; by SIK1. Residues 373-394 (LQHSNQKLKQENLSLRTAVHKS) form a leucine-zipper region. Position 396 is a phosphoserine; by AMPK (Ser396). At Ser402 the chain carries Phosphoserine; by SIK1. Positions 421–479 (VEDTLTPPPSDAGSPFQSSPLSLGSRGSGSGGSGSDSEPDSPVFEDSKAKPEQRPSLHS) are disordered. The residue at position 457 (Ser457) is a Phosphoserine. Residues 465 to 479 (EDSKAKPEQRPSLHS) are compositionally biased toward basic and acidic residues. A helical transmembrane segment spans residues 488-508 (LALCTLVFLCLSCNPLASLLG). Residues 509–547 (ARGLPSPSDTTSVYHSPGRNVLGTESRDGPGWAQWLLPP) are Lumenal-facing. A helical transmembrane segment spans residues 548–568 (VVWLLNGLLVLVSLVLLFVYG). The Cytoplasmic portion of the chain corresponds to 569–1147 (EPVTRPHSGP…LGGGTTVTSS (579 aa)). A Phosphoserine modification is found at Ser1060.

It belongs to the SREBP family. As to quaternary structure, forms a tight complex with SCAP, the SCAP-SREBP complex, in the endoplasmic reticulum membrane and the Golgi apparatus. Interacts with PAQR3; the interaction anchors the SCAP-SREBP complex to the Golgi apparatus in low cholesterol conditions. Efficient DNA binding of the soluble transcription factor fragment requires dimerization with another bHLH protein. Interacts with CEBPA, the interaction produces a transcriptional synergy. Interacts with LMNA. Post-translationally, processed in the Golgi apparatus, releasing the protein from the membrane. At low cholesterol the SCAP-SREBP complex is recruited into COPII vesicles for export from the endoplasmic reticulum. In the Golgi, complex SREBPs are cleaved sequentially by site-1 (MBTPS1, S1P) and site-2 (MBTPS2, S2P) protease. The first cleavage by site-1 protease occurs within the luminal loop, the second cleavage by site-2 protease occurs within the first transmembrane domain, releasing the transcription factor from the Golgi membrane. In terms of processing, phosphorylated by AMPK, leading to suppress protein processing and nuclear translocation, and repress target gene expression. Phosphorylation at Ser-402 by SIK1 represses activity possibly by inhibiting DNA-binding. SCAP-free SREBF1 is ubiquitinated by the BCR(ARMC5) complex, leading to its degradation. Post-translationally, ubiquitinated; the nuclear form has a rapid turnover and is rapidly ubiquitinated and degraded by the proteasome in the nucleus. In terms of tissue distribution, expressed in a wide variety of tissues, most abundant in liver and adrenal gland. In fetal tissues lung and liver shows highest expression. Predominates in hepatoma cell lines. Also expressed in kidney, brain, white fat, and muscle. As to expression, predominantly expressed in liver and adipose tissues. Also expressed in kidney, brain, white fat, and muscle.

The protein resides in the endoplasmic reticulum membrane. The protein localises to the golgi apparatus membrane. It localises to the cytoplasmic vesicle. Its subcellular location is the COPII-coated vesicle membrane. It is found in the nucleus. Activation by cleavage is down-regulated upon activation of SIRT3-dependent PRKAA1/AMPK-alpha signaling cascade which leads to inhibition of ATP-consuming lipogenesis to restore cellular energy balance. In terms of biological role, precursor of the transcription factor form (Processed sterol regulatory element-binding protein 1), which is embedded in the endoplasmic reticulum membrane. Low sterol concentrations promote processing of this form, releasing the transcription factor form that translocates into the nucleus and activates transcription of genes involved in cholesterol biosynthesis and lipid homeostasis. Its function is as follows. Key transcription factor that regulates expression of genes involved in cholesterol biosynthesis and lipid homeostasis. Binds to the sterol regulatory element 1 (SRE-1) (5'-ATCACCCCAC-3'). Has dual sequence specificity binding to both an E-box motif (5'-ATCACGTGA-3') and to SRE-1 (5'-ATCACCCCAC-3'). Regulates the promoters of genes involved in cholesterol biosynthesis and the LDL receptor (LDLR) pathway of sterol regulation. Functionally, isoform expressed only in select tissues, which has higher transcriptional activity compared to SREBP-1C. Able to stimulate both lipogenic and cholesterogenic gene expression. Has a role in the nutritional regulation of fatty acids and triglycerides in lipogenic organs such as the liver. Required for innate immune response in macrophages by regulating lipid metabolism. Predominant isoform expressed in most tissues, which has weaker transcriptional activity compared to isoform SREBP-1A. Primarily controls expression of lipogenic gene. Strongly activates global lipid synthesis in rapidly growing cells. In terms of biological role, the absence of Golgi proteolytic processing requirement makes this isoform constitutively active in transactivation of lipogenic gene promoters. The protein is Sterol regulatory element-binding protein 1 of Homo sapiens (Human).